The sequence spans 279 residues: Large ribosomal subunit protein uL2 (279 aa).

Disordered regions lie at residues 30–59 (EKSL…GGHK) and 225–279 (VMNP…KNKR). Positions 50–59 (TTRHKGGGHK) are enriched in basic residues. Over residues 253 to 268 (PEGRTRRPNKESDKLI) the composition is skewed to basic and acidic residues. Positions 269–279 (VRRRRTGKNKR) are enriched in basic residues.

It belongs to the universal ribosomal protein uL2 family. In terms of assembly, part of the 50S ribosomal subunit. Forms a bridge to the 30S subunit in the 70S ribosome.

In terms of biological role, one of the primary rRNA binding proteins. Required for association of the 30S and 50S subunits to form the 70S ribosome, for tRNA binding and peptide bond formation. It has been suggested to have peptidyltransferase activity; this is somewhat controversial. Makes several contacts with the 16S rRNA in the 70S ribosome. This is Large ribosomal subunit protein uL2 from Kocuria rhizophila (strain ATCC 9341 / DSM 348 / NBRC 103217 / DC2201).